The sequence spans 478 residues: Zinc finger protein 410 (478 aa).

Positions 187–213 (NAKTSSNGENVHLGSGDGQSKDSGPLP) are disordered. 5 C2H2-type zinc fingers span residues 219-243 (LKCT…LKTH), 249-273 (FICP…MRTH), 279-303 (FMCH…RRIH), 309-333 (FLCE…LVVH), and 339-362 (HQCQ…RKHH). Residues Cys221, Cys226, His239, His243, Cys251, Cys256, His269, His273, Cys281, Cys286, His299, His303, Cys311, Cys316, His329, His333, Cys341, Cys344, His357, and His361 each coordinate Zn(2+).

In terms of assembly, interacts with CDKN2A/p14ARF. Sumoylated. Sumoylation increases its half-life, possibly by blocking ubiquitin-mediated degradation. Post-translationally, O-glycosylated. O-GlcNAcylation may occur in response to increasing glucose levels and affect transcription factor activity. As to expression, widely expressed.

The protein resides in the nucleus. The protein localises to the chromosome. In terms of biological role, transcription factor that binds to the sequence motif 5'-CATCCCATAATA-3', and is specifically required to silence expression of fetal hemoglobin in adult erythroid cells. Prevents expression of fetal hemoglobin genes HBG1 and HBG2 through CHD4: acts as a direct transcriptional activator of CHD4, a central component of the NuRD complex that represses transcription of fetal hemoglobin genes HBG1 and HBG2 in erythroid cells. May also activate transcription of matrix-remodeling genes such as MMP1 during fibroblast senescence. May activate transcription of the gap junction gene GJC1, perhaps in response to increasing glucose. However, recent studies suggest that ZNF410 is dedicated to regulate expression of a single gene: CHD4. The polypeptide is Zinc finger protein 410 (Homo sapiens (Human)).